A 941-amino-acid chain; its full sequence is Lysine-specific demethylase 7A (941 aa).

The segment at 37–88 (PVYCVCRQPYDVNRFMIECDICKDWFHGSCVGVEEHHAVDIDLYHCPNCAVL) adopts a PHD-type zinc-finger fold. Residues 97–114 (RRNWHRHDYTEIDDGSKP) form a linker region. One can recognise a JmjC domain in the interval 230–386 (FSDTKMSELV…MQLRCYEMEK (157 aa)). Thr279 contributes to the substrate binding site. Positions 282 and 284 each coordinate Fe cation. Lys299 is a binding site for substrate. Residue His354 participates in Fe cation binding. 3 disordered regions span residues 597-633 (QSLY…EHEE), 677-700 (TTEE…KEES), and 819-921 (QDLS…MATA). Ser604 is subject to Phosphoserine. Basic and acidic residues-rich tracts occupy residues 618–633 (MKIE…EHEE) and 685–700 (GDEK…KEES). Residues 834–876 (SEISQRVQSRNYVDSSGSSLQNGKYMQNSNLTSGACQISNGSL) are compositionally biased toward polar residues.

The protein belongs to the JHDM1 histone demethylase family. JHDM1D subfamily. Requires Fe(2+) as cofactor.

The protein localises to the nucleus. The enzyme catalyses N(6),N(6)-dimethyl-L-lysyl(9)-[histone H3] + 2 2-oxoglutarate + 2 O2 = L-lysyl(9)-[histone H3] + 2 formaldehyde + 2 succinate + 2 CO2. The catalysed reaction is N(6),N(6)-dimethyl-L-lysyl(27)-[histone H3] + 2 2-oxoglutarate + 2 O2 = L-lysyl(27)-[histone H3] + 2 formaldehyde + 2 succinate + 2 CO2. It carries out the reaction N(6),N(6)-dimethyl-L-lysyl(36)-[histone H3] + 2-oxoglutarate + O2 = N(6)-methyl-L-lysyl(36)-[histone H3] + formaldehyde + succinate + CO2. It catalyses the reaction N(6)-methyl-L-lysyl(20)-[histone H4] + 2-oxoglutarate + O2 = L-lysyl(20)-[histone H4] + formaldehyde + succinate + CO2. Histone demethylase required for brain development. Specifically demethylates dimethylated 'Lys-9', 'Lys-27' and 'Lys-36' (H3K9me2, H3K27me2, H3K36me2, respectively) of histone H3 and monomethylated histone H4 'Lys-20' residue (H4K20Me1), thereby playing a central role in histone code. Specifically binds trimethylated 'Lys-4' of histone H3 (H3K4me3), affecting histone demethylase specificity: in presence of H3K4me3, it has no demethylase activity toward H3K9me2, while it has high activity toward H3K27me2. Demethylates H3K9me2 in absence of H3K4me3. Has activity toward H4K20Me1 only when nucleosome is used as a substrate and when not histone octamer is used as substrate. The protein is Lysine-specific demethylase 7A (KDM7A) of Homo sapiens (Human).